Consider the following 3341-residue polypeptide: Genome polyprotein (3341 aa).

Basic and acidic residues-rich tracts occupy residues 1–14 and 24–35; these read MKRK…KAPG and REGRRKDKDKGG. The tract at residues 1 to 57 is disordered; that stretch reads MKRKDLEARGKAPGRDSSTPFWGREGRRKDKDKGGESPSNRQVTLKTPIQSGRRAGK. Residues 1 to 120 lie on the Cytoplasmic side of the membrane; sequence MKRKDLEARG…LESRRTTGNP (120 aa). Residues 37–50 show a composition bias toward polar residues; it reads SPSNRQVTLKTPIQ. The segment at 55–97 is hydrophobic; homodimerization of capsid protein C; sequence AGKRQRVGLLGRLGVGWGSFLQEDIVQALIHMALVLHALFASI. Positions 117 to 136 are cleaved as a propeptide — ER anchor for the capsid protein C, removed in mature form by serine protease NS3; that stretch reads TGNPMTLAFILGFLTVLCGC. The chain crosses the membrane as a helical span at residues 121–141; sequence MTLAFILGFLTVLCGCVVIDM. Topologically, residues 142–245 are extracellular; the sequence is QVSTTRGTEI…AFKTIRENKT (104 aa). Residues Asn157 and Asn243 are each glycosylated (N-linked (GlcNAc...) asparagine; by host). A helical transmembrane segment spans residues 246–262; the sequence is IFIVALLCVAIAKRWPT. Residue Trp263 is a topological domain, cytoplasmic. A helical transmembrane segment spans residues 264–278; sequence VVILLAIGTWTTVKG. The Extracellular portion of the chain corresponds to 279–665; that stretch reads EFVEPLYTLK…GVWQDLVGKF (387 aa). Asn339 carries an N-linked (GlcNAc...) asparagine; by host glycan. The tract at residues 371–384 is involved in fusion; sequence NRGWGTGCFKWGIG. 4 N-linked (GlcNAc...) asparagine; by host glycosylation sites follow: Asn399, Asn411, Asn575, and Asn611. The helical transmembrane segment at 666-686 threads the bilayer; sequence SVGAFFSNTALLVILVLAALI. The Cytoplasmic segment spans residues 687–689; the sequence is DKR. Residues 690 to 705 traverse the membrane as a helical segment; sequence IAFLLVLGGYFYYVRA. The Extracellular segment spans residues 706 to 1138; the sequence is DLGCGIDTTR…AKTRTSTLTR (433 aa). Residues Asn794, Asn896, Asn993, and Asn1027 are each glycosylated (N-linked (GlcNAc...) asparagine; by host). Residues 1139-1159 traverse the membrane as a helical segment; sequence LFLTILAMALFGLPNLFSSVG. Residues 1160–1178 lie on the Cytoplasmic side of the membrane; the sequence is LSAWVLLVASSSAQPQDLS. A helical transmembrane segment spans residues 1179-1199; the sequence is MNLWIVLQTGSSAVLLLGYMI. Topologically, residues 1200-1204 are lumenal; sequence RRKLA. Residues 1205-1225 traverse the membrane as a helical segment; that stretch reads MVLGVHHLVTLMCVQFLFSAV. The Cytoplasmic portion of the chain corresponds to 1226 to 1231; sequence DRYQKY. The chain crosses the membrane as a helical span at residues 1232-1252; it reads LYGLLELMASVVLLSAYKSVL. At 1253–1261 the chain is on the lumenal side; that stretch reads QALPPEVLC. The helical transmembrane segment at 1262 to 1282 threads the bilayer; the sequence is FSLVMGWKTALSLATVVFLIF. Residues 1283-1303 lie on the Cytoplasmic side of the membrane; sequence SLNAMYKYACQYHNPRNGYRD. The helical transmembrane segment at 1304-1324 threads the bilayer; it reads SGANLWFWTVSLASAGGIWAA. Over 1325–1326 the chain is Lumenal; sequence EK. The chain crosses the membrane as a helical span at residues 1327 to 1347; it reads AHQPTVAAVLAFTMVVLFLYM. Over 1348 to 1403 the chain is Cytoplasmic; that stretch reads EQTNVSMELEFISAGETPEGVSTENDDGINIPDLKGRYGEDGIVVGAASSSGYLPE. The helical intramembrane region spans 1404 to 1424; that stretch reads LVFVFLLGFAVTSTSYFLGAL. The Cytoplasmic segment spans residues 1425–2089; it reads YLLIATSTNL…TERSLTVVMA (665 aa). In terms of domain architecture, Peptidase S7 spans 1452–1630; sequence SDDLLGLGGP…KPTDVTESLN (179 aa). Residues His1506, Asp1530, and Ser1589 each act as charge relay system; for serine protease NS3 activity in the active site. The Helicase ATP-binding domain maps to 1627-1780; it reads ESLNCDSTRR…SNYAISDQSI (154 aa). ATP is bound at residue 1640-1647; that stretch reads WHPGKGKT. Residues 1729–1732 carry the DECH box motif; the sequence is DECH. In terms of domain architecture, Helicase C-terminal spans 1793–1947; that stretch reads NVQKSVGAKK…TFMLEEAAYS (155 aa). A helical membrane pass occupies residues 2090–2110; sequence FVLGVSIMLSCFIAVWALCFL. Residues 2111-2145 lie on the Lumenal side of the membrane; that stretch reads FSLFRPKKATYEQMPSSDPLSGGVLVSTPSVLYCM. A helical membrane pass occupies residues 2146–2166; the sequence is GVPLGFCVVITLAMFLVYPVL. At 2167–2178 the chain is on the cytoplasmic side; the sequence is YKSIGNRSYMDS. A helical membrane pass occupies residues 2179–2199; the sequence is DLVKWVILGSCLICGVLAWEM. The Lumenal portion of the chain corresponds to 2200 to 2242; the sequence is RMFPNIRSDLMELVKAVKEPEEVVNSGPSFPSWEIAQGKGATM. A helical membrane pass occupies residues 2243-2263; it reads LDSLQVFFFITVLSTKFLYWF. Residues 2264–2302 lie on the Cytoplasmic side of the membrane; it reads QENWTARMYAMKHPEMVSSIGGFRFDEIPFRAVLPSGFA. Residues 2303-2323 constitute an intramembrane region (helical); sequence IVAIASLPSVVVGLLAAGVFM. At 2324–2366 the chain is on the cytoplasmic side; sequence AIMYCQNKWNATPKILTALDARDQRHDRPTEITSRVPLENTRS. The chain crosses the membrane as a helical span at residues 2367–2387; the sequence is IMYAFCLIFSLFWAFCTRSPG. Residues 2388–2412 lie on the Lumenal side of the membrane; the sequence is DFLRGSLVVGASMWQILHPRSKIHD. Residues 2413 to 2433 form a helical membrane-spanning segment; the sequence is VMDFGSMVSAIGLLEMNYLFY. The Cytoplasmic portion of the chain corresponds to 2434-3341; the sequence is RFMHIAARAL…SRYRRGNDVI (908 aa). An mRNA cap 0-1 NS5-type MT domain is found at 2454-2706; that stretch reads ALEKSTTIGL…SPVLPKGTRA (253 aa). Position 2497 (Ser2497) interacts with S-adenosyl-L-methionine. Lys2509 serves as the catalytic For 2'-O-MTase activity. Gly2527, Trp2528, Thr2545, Ile2546, Asp2572, and Val2573 together coordinate S-adenosyl-L-methionine. Asp2587 (for 2'-O-MTase activity) is an active-site residue. Ile2588 contributes to the S-adenosyl-L-methionine binding site. Catalysis depends on for 2'-O-MTase activity residues Lys2624 and Glu2660. Tyr2662 lines the S-adenosyl-L-methionine pocket. Glu2881, His2885, Cys2890, and Cys2893 together coordinate Zn(2+). Residues 2970-3117 form the RdRp catalytic domain; sequence KYLIADDIAG…STDNRDFSSA (148 aa). The Zn(2+) site is built by His3152, Cys3168, and Cys3287.

The protein in the N-terminal section; belongs to the class I-like SAM-binding methyltransferase superfamily. mRNA cap 0-1 NS5-type methyltransferase family. As to quaternary structure, homodimer. In terms of assembly, forms heterodimers with envelope protein E in the endoplasmic reticulum and Golgi. Homodimer; in the endoplasmic reticulum and Golgi. As to quaternary structure, forms homodimers as well as homohexamers. NS1 may interact with NS4A. In terms of assembly, forms a heterodimer with serine protease NS3. May form homooligomers. Forms a heterodimer with NS2B. Interacts with NS4B. Interacts with unphosphorylated RNA-directed RNA polymerase NS5; this interaction stimulates RNA-directed RNA polymerase NS5 guanylyltransferase activity. As to quaternary structure, interacts with serine protease NS3. In terms of assembly, interacts with host STAT2; this interaction inhibits the phosphorylation of the latter, and, when all viral proteins are present (polyprotein), targets STAT2 for degradation. Post-translationally, genome polyprotein: Specific enzymatic cleavages in vivo yield mature proteins. Cleavages in the lumen of endoplasmic reticulum are performed by host signal peptidase, whereas cleavages in the cytoplasmic side are performed by serine protease NS3. Signal cleavage at the 2K-4B site requires a prior NS3 protease-mediated cleavage at the 4A-2K site. Cleaved in post-Golgi vesicles by a host furin, releasing the mature small envelope protein M, and peptide pr. This cleavage is incomplete as up to 30% of viral particles still carry uncleaved prM. In terms of processing, N-glycosylated. Post-translationally, N-glycosylated. The excreted form is glycosylated and this is required for efficient secretion of the protein from infected cells. Phosphorylated on serines residues. This phosphorylation may trigger NS5 nuclear localization.

The protein localises to the virion. It localises to the host nucleus. It is found in the secreted. The protein resides in the virion membrane. Its subcellular location is the host endoplasmic reticulum membrane. The enzyme catalyses Selective hydrolysis of -Xaa-Xaa-|-Yaa- bonds in which each of the Xaa can be either Arg or Lys and Yaa can be either Ser or Ala.. It catalyses the reaction RNA(n) + a ribonucleoside 5'-triphosphate = RNA(n+1) + diphosphate. It carries out the reaction a ribonucleoside 5'-triphosphate + H2O = a ribonucleoside 5'-diphosphate + phosphate + H(+). The catalysed reaction is ATP + H2O = ADP + phosphate + H(+). The enzyme catalyses a 5'-end (5'-triphosphoguanosine)-ribonucleoside in mRNA + S-adenosyl-L-methionine = a 5'-end (N(7)-methyl 5'-triphosphoguanosine)-ribonucleoside in mRNA + S-adenosyl-L-homocysteine. It catalyses the reaction a 5'-end (N(7)-methyl 5'-triphosphoguanosine)-ribonucleoside in mRNA + S-adenosyl-L-methionine = a 5'-end (N(7)-methyl 5'-triphosphoguanosine)-(2'-O-methyl-ribonucleoside) in mRNA + S-adenosyl-L-homocysteine + H(+). Plays a role in virus budding by binding to the cell membrane and gathering the viral RNA into a nucleocapsid that forms the core of a mature virus particle. During virus entry, may induce genome penetration into the host cytoplasm after hemifusion induced by the surface proteins. Can migrate to the cell nucleus where it modulates host functions. Its function is as follows. Prevents premature fusion activity of envelope proteins in trans-Golgi by binding to envelope protein E at pH6.0. After virion release in extracellular space, gets dissociated from E dimers. Functionally, acts as a chaperone for envelope protein E during intracellular virion assembly by masking and inactivating envelope protein E fusion peptide. prM is the only viral peptide matured by host furin in the trans-Golgi network probably to avoid catastrophic activation of the viral fusion activity in acidic Golgi compartment prior to virion release. prM-E cleavage is inefficient, and many virions are only partially matured. These uncleaved prM would play a role in immune evasion. In terms of biological role, may play a role in virus budding. Exerts cytotoxic effects by activating a mitochondrial apoptotic pathway through M ectodomain. May display a viroporin activity. Binds to host cell surface receptor and mediates fusion between viral and cellular membranes. Envelope protein is synthesized in the endoplasmic reticulum in the form of heterodimer with protein prM. They play a role in virion budding in the ER, and the newly formed immature particle is covered with 60 spikes composed of heterodimer between precursor prM and envelope protein E. The virion is transported to the Golgi apparatus where the low pH causes dissociation of PrM-E heterodimers and formation of E homodimers. prM-E cleavage is inefficient, and many virions are only partially matured. These uncleaved prM would play a role in immune evasion. Its function is as follows. Involved in immune evasion, pathogenesis and viral replication. Once cleaved off the polyprotein, is targeted to three destinations: the viral replication cycle, the plasma membrane and the extracellular compartment. May play a role in viral genome replication. Assist membrane bending and envelopment of genomic RNA at the endoplasmic reticulum. Excreted as a hexameric lipoparticle that plays a role against host immune response. Functionally, component of the viral RNA replication complex that functions in virion assembly and antagonizes the host immune response. In terms of biological role, required cofactor for the serine protease function of NS3. May have membrane-destabilizing activity and form viroporins. Displays three enzymatic activities: serine protease, NTPase and RNA helicase. NS3 serine protease, in association with NS2B, performs its autocleavage and cleaves the polyprotein at dibasic sites in the cytoplasm: C-prM, NS2A-NS2B, NS2B-NS3, NS3-NS4A, NS4A-2K and NS4B-NS5. NS3 RNA helicase binds RNA and unwinds dsRNA in the 3' to 5' direction. Its function is as follows. Regulates the ATPase activity of the NS3 helicase activity. NS4A allows NS3 helicase to conserve energy during unwinding. Functionally, functions as a signal peptide for NS4B and is required for the interferon antagonism activity of the latter. In terms of biological role, inhibits interferon (IFN)-induced host STAT1 phosphorylation and nuclear translocation, thereby preventing the establishment of a cellular antiviral state by blocking the IFN-alpha/beta pathway. Replicates the viral (+) and (-) RNA genome, and performs the capping of genomes in the cytoplasm. NS5 methylates viral RNA cap at guanine N-7 and ribose 2'-O positions. Besides its role in RNA genome replication, also prevents the establishment of cellular antiviral state by blocking the interferon-alpha/beta (IFN-alpha/beta) signaling pathway. Inhibits host TYK2 and STAT2 phosphorylation, thereby preventing activation of JAK-STAT signaling pathway. This chain is Genome polyprotein, found in Aedes (CFA flavivirus).